Reading from the N-terminus, the 553-residue chain is MDNMSITNTPTSNDACLSIVHSLMCHRQGGESETFAKRAIESLVKKLKEKKDELDSLITAITTNGAHPSKCVTIQRTLDGRLQVAGRKGFPHVIYARLWRWPDLHKNELKHVKYCQYAFDLKCDSVCVNPYHYERVVSPGIDLSGLTLQSNAPPSMLVKDEYVHDFEGQPSLSTEGHSIQTIQHPPSNRASTETYSTPALLAPSESNATSTTNFPNIPVASTSQPASILAGSHSEGLLQIASGPQPGQQQNGFTGQPATYHHNSTTTWTGGRTAPYTPNLPHHQNGHLQHHPPMPPHPGHYWPPVHNELAFQPPISNHPAPEYWCSIAYFEMDVQVGETFKVPSSCPIVTVDGYVDPSGGDRFCLGQLSNVHRTEAIERARLHIGKGVQLECKGEGDVWVRCLSDHAVFVQSYYLDREAGRAPGDAVHKIYPSAYIKVFDLRQCHRQMQQQAATAQAAAAAQAAAVAGNIPGPGSVGGIAPAISLSAAAGIGVDDLRRLCILRMSFVKGWGPDYPRQSIKETPCWIEIHLHRALQLLDEVLHTMPIADPQPLD.

The segment at 1–323 is mediates interaction with ZBTB7A; the sequence is MDNMSITNTP…PISNHPAPEY (323 aa). The MH1 domain occupies 18–142; sequence SIVHSLMCHR…YERVVSPGID (125 aa). Lysine 37 is modified (N6-acetyllysine). Positions 44 to 69 are required for interaction with TSC22D1; sequence VKKLKEKKDELDSLITAITTNGAHPS. Cysteine 71 contacts Zn(2+). A Glycyl lysine isopeptide (Lys-Gly) (interchain with G-Cter in SUMO2) cross-link involves residue lysine 113. 3 residues coordinate Zn(2+): cysteine 115, cysteine 127, and histidine 132. The disordered stretch occupies residues 168–194; sequence GQPSLSTEGHSIQTIQHPPSNRASTET. Polar residues predominate over residues 170-194; sequence PSLSTEGHSIQTIQHPPSNRASTET. The SAD stretch occupies residues 275 to 321; the sequence is PYTPNLPHHQNGHLQHHPPMPPHPGHYWPPVHNELAFQPPISNHPAP. The region spanning 324–553 is the MH2 domain; that stretch reads WCSIAYFEMD…MPIADPQPLD (230 aa). N6-acetyllysine is present on residues lysine 429 and lysine 508. Residue lysine 520 forms a Glycyl lysine isopeptide (Lys-Gly) (interchain with G-Cter in ubiquitin) linkage.

Belongs to the dwarfin/SMAD family. Monomer; in the absence of TGF-beta activation. Heterotrimer; on TGF-beta activation. Heterotrimer composed of two molecules of a C-terminally phosphorylated R-SMAD molecule, SMAD2 or SMAD3, and one molecule of SMAD4 to form the transcriptional active SMAD2/SMAD3-SMAD4 complex. Found in a ternary complex composed of SMAD4, STK11/LKB1 and STK11IP. Found in a complex with SMAD1 and YY1. Identified in a complex that contains at least ZNF451, SMAD2, SMAD3 and SMAD4. Interacts with ATF2, COPS5, DACH1, MSG1, SKI, STK11/LKB1, STK11IP and TRIM33. Associates with ZNF423 or ZNF521 in response to BMP2 leading to activate transcription of BMP target genes. Interacts with USP9X. Interacts with RBPMS. Interacts with WWTR1 (via coiled-coil domain). Interacts with CITED1 and CITED2. Interacts with PDPK1 (via PH domain). Interacts with VPS39; this interaction affects heterodimer formation with SMAD3, but not with SMAD2, and leads to inhibition of SMAD3-dependent transcription activation. Interactions with VPS39 and SMAD2 may be mutually exclusive. Interacts (via MH2 domain) with ZNF451 (via N-terminal zinc-finger domains). Interacts with ZC3H3. Interacts weakly with ZNF8. Interacts with NUP93 and IPO7; translocates SMAD4 to the nucleus through the NPC upon BMP7 stimulation resulting in activation of SMAD4 signaling. Interacts with CREB3L1, the interaction takes place upon TGFB1 induction and SMAD4 acts as a CREB3L1 coactivator to induce the expression of genes involved in the assembly of collagen extracellular matrix. Interacts with DLX1. Interacts with ZBTB7A; the interaction is direct and stimulated by TGFB1. Interacts with CREBBP; the recruitment of this transcriptional coactivator is negatively regulated by ZBTB7A. Interacts with EP300; the interaction with this transcriptional coactivator is negatively regulated by ZBTB7A. Interacts with HDAC1. Interacts (via MH2 domain) with ZMIZ1 (via SP-RING-type domain); in the TGF-beta signaling pathway increases the activity of the SMAD3/SMAD4 transcriptional complex. Interacts (via N-terminus) with TSC22D1. Post-translationally, monoubiquitinated on Lys-520 by E3 ubiquitin-protein ligase TRIM33. Monoubiquitination hampers its ability to form a stable complex with activated SMAD2/3 resulting in inhibition of TGF-beta/BMP signaling cascade. In terms of processing, phosphorylated by PDPK1.

Its subcellular location is the cytoplasm. The protein resides in the nucleus. Its function is as follows. Common SMAD (co-SMAD) is the coactivator and mediator of signal transduction by TGF-beta (transforming growth factor). Component of the heterotrimeric SMAD2/SMAD3-SMAD4 complex that forms in the nucleus and is required for the TGF-mediated signaling. Promotes binding of the SMAD2/SMAD4/FAST-1 complex to DNA and provides an activation function required for SMAD1 or SMAD2 to stimulate transcription. Component of the multimeric SMAD3/SMAD4/JUN/FOS complex which forms at the AP1 promoter site; required for synergistic transcriptional activity in response to TGF-beta. Acts synergistically with SMAD1 and YY1 in bone morphogenetic protein (BMP)-mediated cardiac-specific gene expression. Binds to SMAD binding elements (SBEs) (5'-GTCT/AGAC-3') within BMP response element (BMPRE) of cardiac activating regions. May act as a tumor suppressor. Positively regulates PDPK1 kinase activity by stimulating its dissociation from the 14-3-3 protein YWHAQ which acts as a negative regulator. In muscle physiology, plays a central role in the balance between atrophy and hypertrophy. When recruited by MSTN, promotes atrophy response via phosphorylated SMAD2/4. MSTN decrease causes SMAD4 release and subsequent recruitment by the BMP pathway to promote hypertrophy via phosphorylated SMAD1/5/8. The protein is Mothers against decapentaplegic homolog 4 (SMAD4) of Bos taurus (Bovine).